The chain runs to 283 residues: Pantothenate synthetase (283 aa).

Residue 30 to 37 coordinates ATP; the sequence is MGNLHAGH. Residue histidine 37 is the Proton donor of the active site. Residue glutamine 61 coordinates (R)-pantoate. Glutamine 61 provides a ligand contact to beta-alanine. 149–152 contacts ATP; it reads GEKD. (R)-pantoate is bound at residue glutamine 155. ATP contacts are provided by residues leucine 178 and 186–189; that span reads MSSR.

The protein belongs to the pantothenate synthetase family. Homodimer.

The protein resides in the cytoplasm. It catalyses the reaction (R)-pantoate + beta-alanine + ATP = (R)-pantothenate + AMP + diphosphate + H(+). It participates in cofactor biosynthesis; (R)-pantothenate biosynthesis; (R)-pantothenate from (R)-pantoate and beta-alanine: step 1/1. Catalyzes the condensation of pantoate with beta-alanine in an ATP-dependent reaction via a pantoyl-adenylate intermediate. The protein is Pantothenate synthetase of Hahella chejuensis (strain KCTC 2396).